A 402-amino-acid polypeptide reads, in one-letter code: MIIIVIFLMCLKIVLNNIIIWSTLNQTVFLNNIFTINDTYGGLFWNTYYDNNRSNFTYCGIAGNYCSCCGHNISLYNTTNNCSLIIFPNNTEIFNRTYELVYLDKKINYTVKLLKSVDSPTITYNCTNSLITCKNNNGTNVNIYLIINNTIVNDTNGDILNYYWNGNNNFTATCMINNTISSLNETENINCTNPILKYQNYLSTLFYIIIFIVSGLIIGIFISIISVLSIRRKRKKHVEEIESPPPSESNEEDISHDDTTSIHEPSPREPLLPKPYSRYQYNTPIYYMRPSTQPLNPFPLPKPCPPPKPCPPPKPCPPPKPCPPPKPCSPPKPCRPPKPCPPPKPCPPPKPCPPPKPCPPSKPCPSPESYSPPKPLPSIPLLPNIPPLSTQNISLIHVDRII.

A signal peptide spans 1–16; the sequence is MIIIVIFLMCLKIVLN. The Extracellular portion of the chain corresponds to 17-204; that stretch reads NIIIWSTLNQ…ILKYQNYLST (188 aa). N-linked (GlcNAc...) asparagine; by host glycans are attached at residues Asn-25, Asn-37, Asn-52, Asn-55, Asn-72, Asn-77, Asn-81, Asn-89, Asn-95, Asn-108, Asn-125, Asn-137, Asn-148, Asn-153, Asn-169, Asn-177, Asn-184, and Asn-190. 2 disulfide bridges follow: Cys-126–Cys-191 and Cys-133–Cys-174. A helical membrane pass occupies residues 205–225; it reads LFYIIIFIVSGLIIGIFISII. Topologically, residues 226–402 are cytoplasmic; it reads SVLSIRRKRK…ISLIHVDRII (177 aa). The disordered stretch occupies residues 238-276; the sequence is VEEIESPPPSESNEEDISHDDTTSIHEPSPREPLLPKPY. Residues 256–267 show a composition bias toward basic and acidic residues; it reads HDDTTSIHEPSP. Tandem repeats lie at residues 302–307, 308–313, 314–319, 320–325, 326–331, 332–337, 338–343, 344–349, 350–355, 356–361, and 362–367. The 11 X 6 AA tandem repeats of K-P-C-[PRS]-[P]-[PS] stretch occupies residues 302–367; sequence KPCPPPKPCP…CPPSKPCPSP (66 aa). Positions 319–386 are enriched in pro residues; it reads PKPCPPPKPC…PSIPLLPNIP (68 aa). Residues 319–388 are disordered; the sequence is PKPCPPPKPC…IPLLPNIPPL (70 aa).

This sequence belongs to the asfivirus CD2 homolog protein family. As to quaternary structure, both glycosylated and nonglycosylated forms interact (via C-terminus) with the host AP-1 complex. Post-translationally, cleaved into two fragments of 63 kDa and 26 kDa containing respectively the glycosylated N-terminus and the nonglycosylated C-terminus. A full-length 89-kDa glycosylated form also exists.

Its subcellular location is the host cell membrane. The protein localises to the virion membrane. The protein resides in the host Golgi apparatus. Its function is as follows. May play an immunosuppressive role by inhibiting lymphocyte proliferation and subsequently facilitating viral replication and generalization of infection. Responsible for viral hemadsorption, which may help viral spread. Increases virus replication in the tick vector at the step of virus uptake or replication in the tick gut. May play a role in the host Golgi reorganization to yield viral factories. May play a role in host cell penetration. In Ornithodoros (relapsing fever ticks), this protein is CD2 homolog.